We begin with the raw amino-acid sequence, 492 residues long: G protein-activated inward rectifier potassium channel 1 (492 aa).

Over 1–72 (MSALRRKLGD…LFTTLVDLKW (72 aa)) the chain is Cytoplasmic. Residues 16-35 (STSASGGGLPPPRAAPRGKR) form a disordered region. Residues 73-97 (RWNLFIFVLTYTVAWLFMASMWWVI) form a helical membrane-spanning segment. The Extracellular portion of the chain corresponds to 98 to 121 (AYMRGDLNKAHDDSYTPCVANVYN). The segment at residues 122-133 (FPSAFLFFIETE) is an intramembrane region (helical; Pore-forming). Residues 134 to 140 (ATIGYGY) constitute an intramembrane region (pore-forming). A Selectivity filter motif is present at residues 135–140 (TIGYGY). The Extracellular segment spans residues 141-149 (RYITDKCPE). Residues 150–171 (GIILFLFQSILGSIVDAFLIGC) form a helical membrane-spanning segment. At 172–492 (MFIKMSQPKK…LRKMNSDRFT (321 aa)) the chain is on the cytoplasmic side. The polyphosphoinositide (PIP2)-binding stretch occupies residues 174 to 201 (IKMSQPKKRAETLMFSEHAAISMRDGKL). The segment at 452 to 492 (SDPMSQSVADLPPKLQKLSGGGRMEGNLPPKLRKMNSDRFT) is disordered.

This sequence belongs to the inward rectifier-type potassium channel (TC 1.A.2.1) family. KCNJ3 subfamily. As to quaternary structure, associates with KCNJ5/GIRK4 or KCNJ6/GIRK2 or KCNJ9/GIRK3 to form a G-protein activated heteromultimer pore-forming unit. The resulting inward current is much larger.

The protein localises to the membrane. The enzyme catalyses K(+)(in) = K(+)(out). Heteromultimer composed of KCNJ3/GIRK1 and KCNJ5/GIRK4 is activated by phosphatidylinositol 4,5 biphosphate (PtdIns(4,5)P2). Functionally, inward rectifier potassium channels are characterized by a greater tendency to allow potassium to flow into the cell rather than out of it. Their voltage dependence is regulated by the concentration of extracellular potassium; as external potassium is raised, the voltage range of the channel opening shifts to more positive voltages. The inward rectification is mainly due to the blockage of outward current by internal magnesium. This potassium channel is controlled by G proteins. This receptor plays a crucial role in regulating the heartbeat. This is G protein-activated inward rectifier potassium channel 1 (KCNJ3) from Gallus gallus (Chicken).